The following is a 333-amino-acid chain: Holliday junction branch migration complex subunit RuvB (333 aa).

Residues 1-181 are large ATPase domain (RuvB-L); sequence MNDILNKEPM…FGISSHMEYY (181 aa). ATP is bound by residues leucine 20, arginine 21, glycine 62, lysine 65, threonine 66, threonine 67, 128–130, arginine 171, tyrosine 181, and arginine 218; that span reads EDF. A Mg(2+)-binding site is contributed by threonine 66. Residues 182 to 252 are small ATPAse domain (RuvB-S); the sequence is QERDLEEIVK…ITDKALSILD (71 aa). The interval 255-333 is head domain (RuvB-H); it reads AAGLDYIDQK…HLGYVYNEED (79 aa). DNA contacts are provided by arginine 291, arginine 310, and arginine 315.

Belongs to the RuvB family. In terms of assembly, homohexamer. Forms an RuvA(8)-RuvB(12)-Holliday junction (HJ) complex. HJ DNA is sandwiched between 2 RuvA tetramers; dsDNA enters through RuvA and exits via RuvB. An RuvB hexamer assembles on each DNA strand where it exits the tetramer. Each RuvB hexamer is contacted by two RuvA subunits (via domain III) on 2 adjacent RuvB subunits; this complex drives branch migration. In the full resolvosome a probable DNA-RuvA(4)-RuvB(12)-RuvC(2) complex forms which resolves the HJ.

Its subcellular location is the cytoplasm. The enzyme catalyses ATP + H2O = ADP + phosphate + H(+). Functionally, the RuvA-RuvB-RuvC complex processes Holliday junction (HJ) DNA during genetic recombination and DNA repair, while the RuvA-RuvB complex plays an important role in the rescue of blocked DNA replication forks via replication fork reversal (RFR). RuvA specifically binds to HJ cruciform DNA, conferring on it an open structure. The RuvB hexamer acts as an ATP-dependent pump, pulling dsDNA into and through the RuvAB complex. RuvB forms 2 homohexamers on either side of HJ DNA bound by 1 or 2 RuvA tetramers; 4 subunits per hexamer contact DNA at a time. Coordinated motions by a converter formed by DNA-disengaged RuvB subunits stimulates ATP hydrolysis and nucleotide exchange. Immobilization of the converter enables RuvB to convert the ATP-contained energy into a lever motion, pulling 2 nucleotides of DNA out of the RuvA tetramer per ATP hydrolyzed, thus driving DNA branch migration. The RuvB motors rotate together with the DNA substrate, which together with the progressing nucleotide cycle form the mechanistic basis for DNA recombination by continuous HJ branch migration. Branch migration allows RuvC to scan DNA until it finds its consensus sequence, where it cleaves and resolves cruciform DNA. The chain is Holliday junction branch migration complex subunit RuvB from Lactococcus lactis subsp. lactis (strain IL1403) (Streptococcus lactis).